The chain runs to 802 residues: Elongation factor G, mitochondrial (802 aa).

Residues 1–24 (MRCPSLARLPNRALSGLTRSPVRL) constitute a mitochondrion transit peptide. Positions 100–387 (SRLRNIGIAA…GVIDYLPNPS (288 aa)) constitute a tr-type G domain. GTP contacts are provided by residues 109-116 (AHIDSGKT), 185-189 (DTPGH), and 239-242 (NKMD).

Belongs to the TRAFAC class translation factor GTPase superfamily. Classic translation factor GTPase family. EF-G/EF-2 subfamily.

The protein resides in the mitochondrion. Its pathway is protein biosynthesis; polypeptide chain elongation. Mitochondrial GTPase that catalyzes the GTP-dependent ribosomal translocation step during translation elongation. During this step, the ribosome changes from the pre-translocational (PRE) to the post-translocational (POST) state as the newly formed A-site-bound peptidyl-tRNA and P-site-bound deacylated tRNA move to the P and E sites, respectively. Catalyzes the coordinated movement of the two tRNA molecules, the mRNA and conformational changes in the ribosome. The polypeptide is Elongation factor G, mitochondrial (mef1) (Aspergillus fumigatus (strain CBS 144.89 / FGSC A1163 / CEA10) (Neosartorya fumigata)).